A 445-amino-acid polypeptide reads, in one-letter code: UDP-N-acetylmuramoylalanine--D-glutamate ligase (445 aa).

Gly-118–Thr-124 contacts ATP.

The protein belongs to the MurCDEF family.

The protein resides in the cytoplasm. It carries out the reaction UDP-N-acetyl-alpha-D-muramoyl-L-alanine + D-glutamate + ATP = UDP-N-acetyl-alpha-D-muramoyl-L-alanyl-D-glutamate + ADP + phosphate + H(+). Its pathway is cell wall biogenesis; peptidoglycan biosynthesis. Functionally, cell wall formation. Catalyzes the addition of glutamate to the nucleotide precursor UDP-N-acetylmuramoyl-L-alanine (UMA). This Macrococcus caseolyticus (strain JCSC5402) (Macrococcoides caseolyticum) protein is UDP-N-acetylmuramoylalanine--D-glutamate ligase.